Reading from the N-terminus, the 56-residue chain is Large ribosomal subunit protein bL32 (56 aa).

The segment at 1 to 37 is disordered; that stretch reads MAVQQNKKSRSKRGMRRSHDALSTAQLSVDATSGELH. Residues 7 to 16 are compositionally biased toward basic residues; that stretch reads KKSRSKRGMR. Polar residues predominate over residues 21–31; it reads ALSTAQLSVDA.

The protein belongs to the bacterial ribosomal protein bL32 family.

The protein is Large ribosomal subunit protein bL32 of Shewanella loihica (strain ATCC BAA-1088 / PV-4).